The sequence spans 285 residues: Meiotically up-regulated gene 125 protein (285 aa).

It is found in the cytoplasm. The protein resides in the nucleus. Its function is as follows. Has a role in meiosis. In Schizosaccharomyces pombe (strain 972 / ATCC 24843) (Fission yeast), this protein is Meiotically up-regulated gene 125 protein (mug125).